We begin with the raw amino-acid sequence, 619 residues long: Phosphomethylpyrimidine synthase (619 aa).

The span at 93–104 (IKPEDNGLKGPD) shows a compositional bias: basic and acidic residues. The disordered stretch occupies residues 93 to 114 (IKPEDNGLKGPDRSGGVTPFPN). Substrate is bound by residues N217, M246, Y275, H311, 331–333 (SRG), 372–375 (DGLR), and E411. Residue H415 participates in Zn(2+) binding. Residue Y438 participates in substrate binding. Residue H479 participates in Zn(2+) binding. Residues C559, C562, and C567 each contribute to the [4Fe-4S] cluster site.

The protein belongs to the ThiC family. In terms of assembly, homodimer. [4Fe-4S] cluster is required as a cofactor.

It catalyses the reaction 5-amino-1-(5-phospho-beta-D-ribosyl)imidazole + S-adenosyl-L-methionine = 4-amino-2-methyl-5-(phosphooxymethyl)pyrimidine + CO + 5'-deoxyadenosine + formate + L-methionine + 3 H(+). It functions in the pathway cofactor biosynthesis; thiamine diphosphate biosynthesis. Catalyzes the synthesis of the hydroxymethylpyrimidine phosphate (HMP-P) moiety of thiamine from aminoimidazole ribotide (AIR) in a radical S-adenosyl-L-methionine (SAM)-dependent reaction. The sequence is that of Phosphomethylpyrimidine synthase from Rhizorhabdus wittichii (strain DSM 6014 / CCUG 31198 / JCM 15750 / NBRC 105917 / EY 4224 / RW1) (Sphingomonas wittichii).